A 613-amino-acid chain; its full sequence is Kelch-like protein 21 (613 aa).

The BTB domain occupies 38–105 (FDVTLCAEGK…CYTGRVTVTH (68 aa)). The BACK domain occupies 140 to 242 (CLEIQDFAEA…RRFYLLAHVE (103 aa)). Kelch repeat units follow at residues 289–337 (ILVV…ALGN), 338–384 (DIYV…VLKG), 386–424 (LYVVGSDSTERYDHTIDCWEALPPMPHPMDNCSTTACRG), 426–472 (LYAI…TLNG), 474–514 (IYFV…ALGG), and 515–562 (RLYV…SIFR).

Component of the BCR(KLHL21) E3 ubiquitin ligase complex, at least composed of cul3, klhl21 and rbx1.

Its subcellular location is the cytoplasm. It localises to the cytoskeleton. The protein resides in the spindle. The protein operates within protein modification; protein ubiquitination. Substrate-specific adapter of BCR (BTB-CUL3-RBX1) E3 ubiquitin-protein ligase complex required for efficient chromosome alignment and cytokinesis. The BCR(KLHL21) E3 ubiquitin ligase complex regulates localization of the chromosomal passenger complex (CPC) from chromosomes to the spindle midzone in anaphase and mediates the ubiquitination of AURKB. This Danio rerio (Zebrafish) protein is Kelch-like protein 21 (klhl21).